The chain runs to 101 residues: Large ribosomal subunit protein uL6m (101 aa).

The protein belongs to the universal ribosomal protein uL6 family.

The protein resides in the mitochondrion. The polypeptide is Large ribosomal subunit protein uL6m (RPL6) (Marchantia polymorpha (Common liverwort)).